A 406-amino-acid chain; its full sequence is Putative permease Rv2963 (406 aa).

Transmembrane regions (helical) follow at residues W30–V50, L67–L87, L111–E131, F132–A152, L208–V228, A246–G266, G278–L298, V312–F332, and V361–P381.

Belongs to the UPF0718 family.

The protein localises to the cell membrane. The protein is Putative permease Rv2963 of Mycobacterium tuberculosis (strain ATCC 25618 / H37Rv).